Reading from the N-terminus, the 142-residue chain is Large ribosomal subunit protein uL13 (142 aa).

Belongs to the universal ribosomal protein uL13 family. As to quaternary structure, part of the 50S ribosomal subunit.

This protein is one of the early assembly proteins of the 50S ribosomal subunit, although it is not seen to bind rRNA by itself. It is important during the early stages of 50S assembly. This Ralstonia nicotianae (strain ATCC BAA-1114 / GMI1000) (Ralstonia solanacearum) protein is Large ribosomal subunit protein uL13.